Here is a 138-residue protein sequence, read N- to C-terminus: Large ribosomal subunit protein uL16 (138 aa).

Belongs to the universal ribosomal protein uL16 family. Part of the 50S ribosomal subunit.

Functionally, binds 23S rRNA and is also seen to make contacts with the A and possibly P site tRNAs. In Chlamydia trachomatis serovar D (strain ATCC VR-885 / DSM 19411 / UW-3/Cx), this protein is Large ribosomal subunit protein uL16.